Consider the following 526-residue polypeptide: Probable Xaa-Pro aminopeptidase GLRG_02280 (526 aa).

Residues aspartate 285, aspartate 296, glutamate 454, and glutamate 495 each coordinate Mn(2+).

The protein belongs to the peptidase M24B family. Mn(2+) is required as a cofactor.

It carries out the reaction Release of any N-terminal amino acid, including proline, that is linked to proline, even from a dipeptide or tripeptide.. Functionally, catalyzes the removal of a penultimate prolyl residue from the N-termini of peptides. The protein is Probable Xaa-Pro aminopeptidase GLRG_02280 of Colletotrichum graminicola (strain M1.001 / M2 / FGSC 10212) (Maize anthracnose fungus).